Here is a 134-residue protein sequence, read N- to C-terminus: Profilin-4 (134 aa).

A disulfide bond links Cys-13 and Cys-118. The Involved in PIP2 interaction motif lies at 84–100 (AVIRGKKGSGGITIKKT). Thr-114 carries the phosphothreonine modification.

It belongs to the profilin family. In terms of assembly, occurs in many kinds of cells as a complex with monomeric actin in a 1:1 ratio. Phosphorylated by MAP kinases.

The protein resides in the cytoplasm. It is found in the cytoskeleton. Binds to actin and affects the structure of the cytoskeleton. At high concentrations, profilin prevents the polymerization of actin, whereas it enhances it at low concentrations. This is Profilin-4 from Olea europaea (Common olive).